The primary structure comprises 392 residues: uncharacterized protein (392 aa).

Belongs to the chlamydial CPn_0675/CT_696/TC_0068 family.

This is an uncharacterized protein from Chlamydia muridarum (strain MoPn / Nigg).